The following is a 379-amino-acid chain: Early boundary activity protein 3 (379 aa).

The heterotrimeric Elba complex consists of Elba1, Elba2 and Elba3.

The protein resides in the nucleus. Its function is as follows. The heterotrimeric Elba complex is required for chromatin domain boundary function during early embryogenesis. It binds to a 8-bp sequence 5'-CCAATAAG-3' in the Fab-7 insulator or boundary element in the bithorax complex and contributes to its insulator or boundary activity. Elba3 lacks DNA-binding activity and plays the role of an adapter protein, bringing Elba1 and 2 together, thereby establishing a complex that recognizes the asymmetric sequence motif through the BEN domains of Elba1 and 2. The sequence is that of Early boundary activity protein 3 from Drosophila melanogaster (Fruit fly).